The following is a 70-amino-acid chain: UPF0270 protein VP2791 (70 aa).

This sequence belongs to the UPF0270 family.

This chain is UPF0270 protein VP2791, found in Vibrio parahaemolyticus serotype O3:K6 (strain RIMD 2210633).